The primary structure comprises 301 residues: Quinolinate synthase (301 aa).

His-21 and Ser-38 together coordinate iminosuccinate. Cys-83 provides a ligand contact to [4Fe-4S] cluster. Iminosuccinate is bound by residues Tyr-109–Asn-111 and Ser-126. A [4Fe-4S] cluster-binding site is contributed by Cys-169. Residues His-195–Glu-197 and Thr-212 contribute to the iminosuccinate site. Cys-257 provides a ligand contact to [4Fe-4S] cluster.

It belongs to the quinolinate synthase family. Type 2 subfamily. Requires [4Fe-4S] cluster as cofactor.

Its subcellular location is the cytoplasm. The enzyme catalyses iminosuccinate + dihydroxyacetone phosphate = quinolinate + phosphate + 2 H2O + H(+). Its pathway is cofactor biosynthesis; NAD(+) biosynthesis; quinolinate from iminoaspartate: step 1/1. Its function is as follows. Catalyzes the condensation of iminoaspartate with dihydroxyacetone phosphate to form quinolinate. The protein is Quinolinate synthase of Clostridium perfringens (strain 13 / Type A).